Consider the following 170-residue polypeptide: Putative 3-methyladenine DNA glycosylase (170 aa).

This sequence belongs to the DNA glycosylase MPG family.

The sequence is that of Putative 3-methyladenine DNA glycosylase from Sodalis glossinidius.